Consider the following 352-residue polypeptide: Putative [LysW]-L-2-aminoadipate/[LysW]-L-glutamate phosphate reductase (352 aa).

NADP(+) contacts are provided by residues 10–13 (SGFT) and 34–36 (SRK). Residue Cys151 is part of the active site. Asn319 serves as a coordination point for NADP(+).

It belongs to the NAGSA dehydrogenase family. Type 1 subfamily. LysY sub-subfamily.

It localises to the cytoplasm. The enzyme catalyses [amino-group carrier protein]-C-terminal-N-(1-carboxy-5-oxopentan-1-yl)-L-glutamine + phosphate + NADP(+) = [amino-group carrier protein]-C-terminal-N-(1-carboxy-5-phosphooxy-5-oxopentan-1-yl)-L-glutamine + NADPH + H(+). It catalyses the reaction [amino-group carrier protein]-C-terminal-gamma-(L-glutamyl-5-semialdehyde)-L-glutamate + phosphate + NADP(+) = [amino-group carrier protein]-C-terminal-gamma-(5-phospho-L-glutamyl)-L-glutamate + NADPH + H(+). It participates in amino-acid biosynthesis; L-lysine biosynthesis via AAA pathway; L-lysine from L-alpha-aminoadipate (Thermus route): step 3/5. The protein operates within amino-acid biosynthesis; L-arginine biosynthesis. Its function is as follows. Involved in both the arginine and lysine biosynthetic pathways. The polypeptide is Putative [LysW]-L-2-aminoadipate/[LysW]-L-glutamate phosphate reductase (Pyrobaculum neutrophilum (strain DSM 2338 / JCM 9278 / NBRC 100436 / V24Sta) (Thermoproteus neutrophilus)).